Here is a 195-residue protein sequence, read N- to C-terminus: Small ribosomal subunit protein uS7 (195 aa).

The protein belongs to the universal ribosomal protein uS7 family. As to quaternary structure, part of the 30S ribosomal subunit.

One of the primary rRNA binding proteins, it binds directly to 16S rRNA where it nucleates assembly of the head domain of the 30S subunit. Is located at the subunit interface close to the decoding center. The protein is Small ribosomal subunit protein uS7 of Sulfolobus acidocaldarius (strain ATCC 33909 / DSM 639 / JCM 8929 / NBRC 15157 / NCIMB 11770).